The following is a 98-amino-acid chain: Co-chaperonin GroES (98 aa).

The protein belongs to the GroES chaperonin family. In terms of assembly, heptamer of 7 subunits arranged in a ring. Interacts with the chaperonin GroEL.

The protein resides in the cytoplasm. Its function is as follows. Together with the chaperonin GroEL, plays an essential role in assisting protein folding. The GroEL-GroES system forms a nano-cage that allows encapsulation of the non-native substrate proteins and provides a physical environment optimized to promote and accelerate protein folding. GroES binds to the apical surface of the GroEL ring, thereby capping the opening of the GroEL channel. This chain is Co-chaperonin GroES, found in Renibacterium salmoninarum (strain ATCC 33209 / DSM 20767 / JCM 11484 / NBRC 15589 / NCIMB 2235).